Here is a 493-residue protein sequence, read N- to C-terminus: Probable mannosyl-oligosaccharide alpha-1,2-mannosidase 1B (493 aa).

The N-terminal stretch at 1 to 18 is a signal peptide; sequence MHLPSLSVALALVSSSLA. 2 N-linked (GlcNAc...) asparagine glycosylation sites follow: asparagine 87 and asparagine 174. Residues cysteine 324 and cysteine 353 are joined by a disulfide bond. The Proton donor role is filled by glutamate 367. Asparagine 489 carries an N-linked (GlcNAc...) asparagine glycan.

The protein belongs to the glycosyl hydrolase 47 family. As to quaternary structure, monomer. It depends on Ca(2+) as a cofactor. Requires Mg(2+) as cofactor.

The protein localises to the cytoplasmic vesicle lumen. It catalyses the reaction N(4)-(alpha-D-Man-(1-&gt;2)-alpha-D-Man-(1-&gt;2)-alpha-D-Man-(1-&gt;3)-[alpha-D-Man-(1-&gt;2)-alpha-D-Man-(1-&gt;3)-[alpha-D-Man-(1-&gt;2)-alpha-D-Man-(1-&gt;6)]-alpha-D-Man-(1-&gt;6)]-beta-D-Man-(1-&gt;4)-beta-D-GlcNAc-(1-&gt;4)-beta-D-GlcNAc)-L-asparaginyl-[protein] (N-glucan mannose isomer 9A1,2,3B1,2,3) + 4 H2O = N(4)-(alpha-D-Man-(1-&gt;3)-[alpha-D-Man-(1-&gt;3)-[alpha-D-Man-(1-&gt;6)]-alpha-D-Man-(1-&gt;6)]-beta-D-Man-(1-&gt;4)-beta-D-GlcNAc-(1-&gt;4)-beta-D-GlcNAc)-L-asparaginyl-[protein] (N-glucan mannose isomer 5A1,2) + 4 beta-D-mannose. It carries out the reaction N(4)-(alpha-D-Man-(1-&gt;2)-alpha-D-Man-(1-&gt;2)-alpha-D-Man-(1-&gt;3)-[alpha-D-Man-(1-&gt;3)-[alpha-D-Man-(1-&gt;2)-alpha-D-Man-(1-&gt;6)]-alpha-D-Man-(1-&gt;6)]-beta-D-Man-(1-&gt;4)-beta-D-GlcNAc-(1-&gt;4)-beta-D-GlcNAc)-L-asparaginyl-[protein] (N-glucan mannose isomer 8A1,2,3B1,3) + 3 H2O = N(4)-(alpha-D-Man-(1-&gt;3)-[alpha-D-Man-(1-&gt;3)-[alpha-D-Man-(1-&gt;6)]-alpha-D-Man-(1-&gt;6)]-beta-D-Man-(1-&gt;4)-beta-D-GlcNAc-(1-&gt;4)-beta-D-GlcNAc)-L-asparaginyl-[protein] (N-glucan mannose isomer 5A1,2) + 3 beta-D-mannose. The protein operates within protein modification; protein glycosylation. Its function is as follows. Involved in the maturation of Asn-linked oligosaccharides. Progressively trims alpha-1,2-linked mannose residues from Man(9)GlcNAc(2) to produce Man(5)GlcNAc(2). The protein is Probable mannosyl-oligosaccharide alpha-1,2-mannosidase 1B (mns1B) of Neosartorya fischeri (strain ATCC 1020 / DSM 3700 / CBS 544.65 / FGSC A1164 / JCM 1740 / NRRL 181 / WB 181) (Aspergillus fischerianus).